The sequence spans 186 residues: Hydra actinoporin-like toxin 1 (186 aa).

The signal sequence occupies residues 1–18 (MLLYICLVNLLLPLSVGA). The segment at 29–48 (KVGVDAALQQIDDVWKGKTV) is N-terminal region. The short motif at 158–160 (RAG) is the Cell attachment site, crucial for protein stability element.

Belongs to the actinoporin family. HALT subfamily. Octamer or nonamer in membranes. Monomer in the soluble state. In vitro, interacts with folate receptor alpha (of target organism). As to expression, expressed female germline during oogenesis.

The protein resides in the nematocyst. It is found in the secreted. The protein localises to the target cell membrane. Its function is as follows. Pore-forming protein that forms hydrophilic pores and causes cytolysis. Compared to equinatoxin-2 (AC P61914), it reveals lower cytolysis activity (5-12-fold difference, tested on erythrocytes), a larger pore size (probably 2-3 nm) and different affinity to membrane lipids (100-fold lower affinity to sphingomyelin). Binds to sulfatides (SFT) as well as to the two sphingolipids, lysophosphatidic acid (LPA) and sphingosine-1-phosphate (S1P). It seems to bind more strongly to LPA than to S1P and SFT. Shows cytolytic activity on HeLa cells, with a different potency than its paralogs (from most potent to less potent: HALT-4&gt;HALT-6~HALT-1&gt;HALT-3&gt;HALT-7&gt;HALT-2). Pore formation is a multi-step process that involves specific recognition of membrane lipid by a protein aromatic residues rich region, firm binding to the membrane (mainly driven by hydrophobic interactions) accompanied by the transfer of the N-terminal region to the lipid-water interface and finally pore formation after oligomerization of monomers. In vitro, binds to the folate receptor alpha (FOLR1), a GPI-anchored membrane protein that plays a major role in the uptake of folate/folic acid into cells via endocytosis, suggesting a possible involvement of this receptor in the mechanism of HALT-1-induced cell lysis. In vivo, does not cause visible paralysis in larvae of the blowfly Sarcophaga faculata, the most common arthropod prey of Hydra. The protein is Hydra actinoporin-like toxin 1 of Hydra vulgaris (Hydra).